A 918-amino-acid chain; its full sequence is von Willebrand factor A domain-containing protein DDB_G0292016 (918 aa).

One can recognise a VIT domain in the interval 44–172 (KRCGLYSLKN…NVKVRVVISS (129 aa)). A VWFA domain is found at 299 to 467 (EFIFLIDCSG…NMEKQVMKLL (169 aa)). The interval 625–814 (VDIMNQSPPI…PSAPSQQKSV (190 aa)) is disordered. The span at 650–690 (ASGALSSSILSRKRSSSPSTATKRSSSSSFSSSYLSLSSSS) shows a compositional bias: low complexity. A compositionally biased stretch (acidic residues) spans 716–746 (YESDGGDQSSEQDEEEEDDCDDFHEDLDEDL). Positions 752 to 774 (DVDKKECEKECKKKDSSKVDLKV) are enriched in basic and acidic residues. Over residues 777–814 (SKVPLPSRSPSVSKPTTTSLLSPSPKSAPSAPSQQKSV) the composition is skewed to low complexity.

This is von Willebrand factor A domain-containing protein DDB_G0292016 from Dictyostelium discoideum (Social amoeba).